Consider the following 207-residue polypeptide: Dephospho-CoA kinase (207 aa).

In terms of domain architecture, DPCK spans 5 to 203; that stretch reads AVGLTGGVAC…ARYRALASVF (199 aa). 13–18 is an ATP binding site; it reads ACGKSL.

This sequence belongs to the CoaE family.

It is found in the cytoplasm. The enzyme catalyses 3'-dephospho-CoA + ATP = ADP + CoA + H(+). It participates in cofactor biosynthesis; coenzyme A biosynthesis; CoA from (R)-pantothenate: step 5/5. Its function is as follows. Catalyzes the phosphorylation of the 3'-hydroxyl group of dephosphocoenzyme A to form coenzyme A. The chain is Dephospho-CoA kinase from Xylella fastidiosa (strain Temecula1 / ATCC 700964).